Consider the following 311-residue polypeptide: MRLIFAGTPEPAVVVLSRLLESEHEVVAVLTRPDARRGRGRTLHPSPVSELAQQHGIEVLTPATIKPNTPDGDAFRARLTELAPDCVPVVAYGNLITEDLLQAVPHGWINLHFSLLPRWRGAAPVQAAIAAGDTSTGATTFRIDKGLDTGQILGVIHEPIQSTDTADDLLTRLAYSGADLLVNTMDNLAQGIATYSEQIGTATYAPKITTEDARIQWTHPAEAVDKHIRAVTPGPGAWSLLGDQRFKIGPVSVAEESDLQPGHMRIEKNRVLVGTGDLNIELDQIQPQGKKRMKASDWARGLQNTEGLVLS.

Residue Ser114 to Pro117 participates in (6S)-5,6,7,8-tetrahydrofolate binding.

This sequence belongs to the Fmt family.

The catalysed reaction is L-methionyl-tRNA(fMet) + (6R)-10-formyltetrahydrofolate = N-formyl-L-methionyl-tRNA(fMet) + (6S)-5,6,7,8-tetrahydrofolate + H(+). Its function is as follows. Attaches a formyl group to the free amino group of methionyl-tRNA(fMet). The formyl group appears to play a dual role in the initiator identity of N-formylmethionyl-tRNA by promoting its recognition by IF2 and preventing the misappropriation of this tRNA by the elongation apparatus. This Corynebacterium diphtheriae (strain ATCC 700971 / NCTC 13129 / Biotype gravis) protein is Methionyl-tRNA formyltransferase.